The following is a 98-amino-acid chain: Large ribosomal subunit protein uL23 (98 aa).

It belongs to the universal ribosomal protein uL23 family. In terms of assembly, part of the 50S ribosomal subunit. Contacts protein L29, and trigger factor when it is bound to the ribosome.

In terms of biological role, one of the early assembly proteins it binds 23S rRNA. One of the proteins that surrounds the polypeptide exit tunnel on the outside of the ribosome. Forms the main docking site for trigger factor binding to the ribosome. The sequence is that of Large ribosomal subunit protein uL23 from Dinoroseobacter shibae (strain DSM 16493 / NCIMB 14021 / DFL 12).